A 575-amino-acid chain; its full sequence is DNA mismatch repair protein MutL (575 aa).

This sequence belongs to the DNA mismatch repair MutL/HexB family.

Functionally, this protein is involved in the repair of mismatches in DNA. It is required for dam-dependent methyl-directed DNA mismatch repair. May act as a 'molecular matchmaker', a protein that promotes the formation of a stable complex between two or more DNA-binding proteins in an ATP-dependent manner without itself being part of a final effector complex. The sequence is that of DNA mismatch repair protein MutL from Coxiella burnetii (strain CbuG_Q212) (Coxiella burnetii (strain Q212)).